The following is a 212-amino-acid chain: Large ribosomal subunit protein mL48 (212 aa).

A mitochondrion-targeting transit peptide spans 1 to 28 (MSGTLEKVLCLRNNTIFKQAFSLLRFRT). Lys-199 carries the post-translational modification N6-succinyllysine.

This sequence belongs to the mitochondrion-specific ribosomal protein mL48 family. As to quaternary structure, component of the mitochondrial large ribosomal subunit (mt-LSU). Mature mammalian 55S mitochondrial ribosomes consist of a small (28S) and a large (39S) subunit. The 28S small subunit contains a 12S ribosomal RNA (12S mt-rRNA) and 30 different proteins. The 39S large subunit contains a 16S rRNA (16S mt-rRNA), a copy of mitochondrial valine transfer RNA (mt-tRNA(Val)), which plays an integral structural role, and 52 different proteins. mL48 is located at the central protuberance. Interacts with OXA1L.

It is found in the mitochondrion. The sequence is that of Large ribosomal subunit protein mL48 (MRPL48) from Homo sapiens (Human).